The sequence spans 224 residues: Glutathione S-transferase Mu 5 (224 aa).

The region spanning 4–91 (KSMVLGYWDI…YIARKHNMCG (88 aa)) is the GST N-terminal domain. At Ser-5 the chain carries Phosphoserine. Glutathione is bound by residues 10-11 (YW), 49-53 (WLDVK), 62-63 (NL), and 75-76 (QS). Residues 93–211 (TEEEKIRVDI…QSDRFFKMPI (119 aa)) form the GST C-terminal domain. Tyr-119 contacts substrate.

It belongs to the GST superfamily. Mu family. As to quaternary structure, homodimer. Interacts with PFKM isoform 2 and isoform 3 (via N-terminal testis-specific region).

Its subcellular location is the cytoplasm. The catalysed reaction is RX + glutathione = an S-substituted glutathione + a halide anion + H(+). In terms of biological role, conjugation of reduced glutathione to a wide number of exogenous and endogenous hydrophobic electrophiles. The protein is Glutathione S-transferase Mu 5 (Gstm5) of Mus musculus (Mouse).